Consider the following 194-residue polypeptide: MERGMNHRILYPFADFGDTVAILPANETQRKGLDTPVDDRDGDDSLVTYFELARVMERASRRFSGLLRAELTKLGVEDIGPAQAMVLLAIGEAELSVGELLDRGHYVGSNISYYLKQLADGDYIDRIASQRDKRSARIRLSEKGRQLCAGLRQAAKGYERALSHGDQDRRNLETAFQTLHRLELVWGNAARYGI.

Residues 49 to 184 enclose the HTH marR-type domain; it reads YFELARVMER…AFQTLHRLEL (136 aa).

In terms of biological role, transcriptional activator of genes for galactoglucan synthesis (exopolysaccharide II or EPS II). In Rhizobium meliloti (strain 1021) (Ensifer meliloti), this protein is Exopolysaccharide II synthesis transcriptional activator ExpG (expG).